Reading from the N-terminus, the 342-residue chain is MRVAIVNDMPLAVEALRRSLAHDPELSLAWIASDGLQAVRRCAADLPDVILMDLMMPVMNGVEATRLIMAESPCAIIVVTSDVLQHTSLVFEAMGHGALDAVDTPVLGRGDPKAAAQRLLRKIRNAGWLIGKKTVALERTTAMASSDTDAALVVIGASAGGPPSLAAVLRALPASFPAAIVLVQHVDAAFTSGMAAWLNEQCVLPVRLASDGLRPEAGVVLLAGAGEHLVLGAERKLHYTTEPRESVYSPSIDVFFHSVAQHWRGRAAGVLLTGMGQDGALGLKAMRERGFFTIAQDRATSAVYGMPKAAAALDAACEILPLGDIAPRLEKVFAPPANPLFN.

The region spanning 2–119 (RVAIVNDMPL…GDPKAAAQRL (118 aa)) is the Response regulatory domain. The residue at position 53 (D53) is a 4-aspartylphosphate. The 184-residue stretch at 146–329 (SDTDAALVVI…LPLGDIAPRL (184 aa)) folds into the CheB-type methylesterase domain. Catalysis depends on residues S158, H185, and D278.

Belongs to the CheB family. In terms of processing, phosphorylated by CheA. Phosphorylation of the N-terminal regulatory domain activates the methylesterase activity.

It localises to the cytoplasm. The catalysed reaction is [protein]-L-glutamate 5-O-methyl ester + H2O = L-glutamyl-[protein] + methanol + H(+). It carries out the reaction L-glutaminyl-[protein] + H2O = L-glutamyl-[protein] + NH4(+). Involved in chemotaxis. Part of a chemotaxis signal transduction system that modulates chemotaxis in response to various stimuli. Catalyzes the demethylation of specific methylglutamate residues introduced into the chemoreceptors (methyl-accepting chemotaxis proteins or MCP) by CheR. Also mediates the irreversible deamidation of specific glutamine residues to glutamic acid. The polypeptide is Protein-glutamate methylesterase/protein-glutamine glutaminase 1 (Bordetella avium (strain 197N)).